The following is a 631-amino-acid chain: Chaperone protein DnaK (631 aa).

Thr197 bears the Phosphothreonine; by autocatalysis mark. A disordered region spans residues 600-631 (KKENPQAADAQQGNTANAGKKKDDDVIDAEVE).

The protein belongs to the heat shock protein 70 family.

In terms of biological role, acts as a chaperone. The sequence is that of Chaperone protein DnaK from Wolinella succinogenes (strain ATCC 29543 / DSM 1740 / CCUG 13145 / JCM 31913 / LMG 7466 / NCTC 11488 / FDC 602W) (Vibrio succinogenes).